Reading from the N-terminus, the 155-residue chain is Interleukin-2 (155 aa).

The first 20 residues, 1–20 (MYKIQLLSCIALTLALVANG), serve as a signal peptide directing secretion. T23 is a glycosylation site (O-linked (GalNAc...) threonine). Residues C79 and C127 are joined by a disulfide bond.

Belongs to the IL-2 family.

The protein localises to the secreted. Functionally, cytokine produced by activated CD4-positive helper T-cells and to a lesser extend activated CD8-positive T-cells and natural killer (NK) cells that plays pivotal roles in the immune response and tolerance. Binds to a receptor complex composed of either the high-affinity trimeric IL-2R (IL2RA/CD25, IL2RB/CD122 and IL2RG/CD132) or the low-affinity dimeric IL-2R (IL2RB and IL2RG). Interaction with the receptor leads to oligomerization and conformation changes in the IL-2R subunits resulting in downstream signaling starting with phosphorylation of JAK1 and JAK3. In turn, JAK1 and JAK3 phosphorylate the receptor to form a docking site leading to the phosphorylation of several substrates including STAT5. This process leads to activation of several pathways including STAT, phosphoinositide-3-kinase/PI3K and mitogen-activated protein kinase/MAPK pathways. Functions as a T-cell growth factor and can increase NK-cell cytolytic activity as well. Promotes strong proliferation of activated B-cells and subsequently immunoglobulin production. Plays a pivotal role in regulating the adaptive immune system by controlling the survival and proliferation of regulatory T-cells, which are required for the maintenance of immune tolerance. Moreover, participates in the differentiation and homeostasis of effector T-cell subsets, including Th1, Th2, Th17 as well as memory CD8-positive T-cells. The sequence is that of Interleukin-2 (IL2) from Bubalus bubalis (Domestic water buffalo).